The following is a 523-amino-acid chain: Alanine aminotransferase 2 (523 aa).

The interval 1–25 (MQRAAALVRRGCGPRTPSSWGRSQS) is disordered. Pyridoxal 5'-phosphate contacts are provided by Ala-187, Ser-188, Tyr-216, Asn-271, and Ser-338. At Lys-341 the chain carries N6-(pyridoxal phosphate)lysine. Position 350 (Arg-350) interacts with pyridoxal 5'-phosphate. An N6-acetyllysine mark is found at Lys-415, Lys-505, and Lys-512.

Belongs to the class-I pyridoxal-phosphate-dependent aminotransferase family. Alanine aminotransferase subfamily. In terms of assembly, homodimer. It depends on pyridoxal 5'-phosphate as a cofactor. As to expression, expressed at high levels in muscle, adipose tissue, kidney and brain and at lower levels in the liver and breast.

The catalysed reaction is L-alanine + 2-oxoglutarate = pyruvate + L-glutamate. The protein operates within amino-acid degradation; L-alanine degradation via transaminase pathway; pyruvate from L-alanine: step 1/1. Functionally, catalyzes the reversible transamination between alanine and 2-oxoglutarate to form pyruvate and glutamate. The sequence is that of Alanine aminotransferase 2 (GPT2) from Homo sapiens (Human).